A 2837-amino-acid polypeptide reads, in one-letter code: Bifunctional DNA-directed RNA polymerase subunit beta-beta' (2837 aa).

Positions 1-1433 are DNA-directed RNA polymerase subunit beta; that stretch reads MVDSSYMYAS…CLNVDLKQND (1433 aa). Residues 1436-2837 form a DNA-directed RNA polymerase subunit beta' region; sequence IEDISHTNIA…ESVVAYDQSN (1402 aa). Zn(2+)-binding residues include Cys-1501, Cys-1503, Cys-1516, and Cys-1519. Positions 1893, 1895, and 1897 each coordinate Mg(2+). The Zn(2+) site is built by Cys-2235, Cys-2309, Cys-2316, and Cys-2319.

This sequence in the N-terminal section; belongs to the RNA polymerase beta chain family. The protein in the C-terminal section; belongs to the RNA polymerase beta' chain family. The RNAP catalytic core consists of 2 alpha, 1 beta/beta' and 1 omega subunit. When a sigma factor is associated with the core the holoenzyme is formed, which can initiate transcription. The cofactor is Mg(2+). It depends on Zn(2+) as a cofactor.

It carries out the reaction RNA(n) + a ribonucleoside 5'-triphosphate = RNA(n+1) + diphosphate. In terms of biological role, DNA-dependent RNA polymerase catalyzes the transcription of DNA into RNA using the four ribonucleoside triphosphates as substrates. In Wolbachia pipientis wMel, this protein is Bifunctional DNA-directed RNA polymerase subunit beta-beta' (rpoBC).